The following is a 275-amino-acid chain: tRNA pseudouridine synthase A (275 aa).

Residue D60 is the Nucleophile of the active site. Y119 is a binding site for substrate.

The protein belongs to the tRNA pseudouridine synthase TruA family. In terms of assembly, homodimer.

It catalyses the reaction uridine(38/39/40) in tRNA = pseudouridine(38/39/40) in tRNA. Formation of pseudouridine at positions 38, 39 and 40 in the anticodon stem and loop of transfer RNAs. The polypeptide is tRNA pseudouridine synthase A (Synechocystis sp. (strain ATCC 27184 / PCC 6803 / Kazusa)).